We begin with the raw amino-acid sequence, 264 residues long: Apolipoprotein A-I (264 aa).

Residues 1-18 (MKAVVLTVAVFFLTGSQA) form the signal peptide. 2 consecutive repeat copies span residues 67 to 88 (LKLLDNWDSLSSTVSKLREQIG) and 89 to 110 (PVTQEFWDKLEKDTVSLRQEMN). The tract at residues 67–264 (LKLLDNWDSL…DEATKKLTTQ (198 aa)) is 10 X approximate tandem repeats. M109 carries the post-translational modification Methionine sulfoxide. The stretch at 111–121 (KDLEEVKLKVQ) is one 3; half-length repeat. 3 repeat units span residues 122–143 (PYLDEFQKRWQEDVERYRQQVE), 144–165 (PLGTELREGARQKLQELHEKLS), and 166–187 (PLGQELRDRARAHVDALRTHLA). The 7; truncated repeat unit spans residues 188–207 (PYSDELRQRLAARLEALKES). The stretch at 208-229 (SSLADYQAKATEHLSALGEKAK) is repeat 8. The stretch at 230–240 (PALEDLRQGLL) is one 9; half-length repeat. The stretch at 241-264 (PVLENLKMSFWSAVDEATKKLTTQ) is repeat 10.

This sequence belongs to the apolipoprotein A1/A4/E family. Homodimer. Interacts with APOA1BP and CLU. Component of a sperm activating protein complex (SPAP), consisting of APOA1, an immunoglobulin heavy chain, an immunoglobulin light chain and albumin. Interacts with NDRG1. Interacts with SCGB3A2. Interacts with NAXE and YJEFN3. Glycosylated. In terms of processing, palmitoylated. Post-translationally, phosphorylation sites are present in the extracellular medium.

Its subcellular location is the secreted. In terms of biological role, participates in the reverse transport of cholesterol from tissues to the liver for excretion by promoting cholesterol efflux from tissues and by acting as a cofactor for the lecithin cholesterol acyltransferase (LCAT). As part of the SPAP complex, activates spermatozoa motility. This Marmota monax (Woodchuck) protein is Apolipoprotein A-I (ApoA1).